Consider the following 122-residue polypeptide: Fluoride-specific ion channel FluC 2 (122 aa).

4 helical membrane passes run 4-24 (VAVW…RFVV), 38-58 (LGTL…GGLA), 63-83 (AALL…TWML), and 96-116 (AALA…FIGQ). Glycine 73 and threonine 76 together coordinate Na(+).

Belongs to the fluoride channel Fluc/FEX (TC 1.A.43) family.

Its subcellular location is the cell membrane. It catalyses the reaction fluoride(in) = fluoride(out). Na(+) is not transported, but it plays an essential structural role and its presence is essential for fluoride channel function. In terms of biological role, fluoride-specific ion channel. Important for reducing fluoride concentration in the cell, thus reducing its toxicity. This Mycolicibacterium paratuberculosis (strain ATCC BAA-968 / K-10) (Mycobacterium paratuberculosis) protein is Fluoride-specific ion channel FluC 2.